The chain runs to 335 residues: N-acetyl-gamma-glutamyl-phosphate reductase (335 aa).

Cys-155 is a catalytic residue.

The protein belongs to the NAGSA dehydrogenase family. Type 1 subfamily.

The protein resides in the cytoplasm. The enzyme catalyses N-acetyl-L-glutamate 5-semialdehyde + phosphate + NADP(+) = N-acetyl-L-glutamyl 5-phosphate + NADPH + H(+). It functions in the pathway amino-acid biosynthesis; L-arginine biosynthesis; N(2)-acetyl-L-ornithine from L-glutamate: step 3/4. In terms of biological role, catalyzes the NADPH-dependent reduction of N-acetyl-5-glutamyl phosphate to yield N-acetyl-L-glutamate 5-semialdehyde. The chain is N-acetyl-gamma-glutamyl-phosphate reductase from Pasteurella multocida (strain Pm70).